The chain runs to 558 residues: Hsp70-Hsp90 organizing protein 3 (558 aa).

TPR repeat units lie at residues 2-35 (AEEAKSKGNAAFSSGDYATAITHFTEAINLSPTN), 37-69 (ILYSNRSASYASLHRYEEALSDAKKTIELKPDW), 70-103 (SKGYSRLGAAFIGLSKFDEAVDSYKKGLEIDPSN), and 136-173 (EKLTADPGTRVYLEQDDFVKTMKEIQRNPNNLNLYMKD). Positions 131–170 (GKEMWEKLTADPGTRVYLEQDDFVKTMKEIQRNPNNLNLY) constitute an STI1 1 domain. Positions 191–232 (SSGEDTEMKEADERKEPEPEMEPMELTEEERQKKERKEKALK) are disordered. Over residues 196 to 208 (TEMKEADERKEPE) the composition is skewed to basic and acidic residues. Over residues 209–218 (PEMEPMELTE) the composition is skewed to acidic residues. A compositionally biased stretch (basic and acidic residues) spans 219-232 (EERQKKERKEKALK). The short motif at 227–244 (KEKALKEKGEGNVAYKKK) is the Bipartite nuclear localization signal element. 6 TPR repeats span residues 230-263 (ALKEKGEGNVAYKKKDFGRAVEHYTKAMELDDED), 265-297 (SYLTNRAAVYLEMGKYEECIEDCDKAVERGREL), 305-342 (ARALTRKGSALVKMARCSKDFEPAIETFQKALTEHRNP), 369-402 (AEEEREKGNGFFKEQKYPEAVKHYSEAIKRNPND), 404-436 (RAYSNRAACYTKLGALPEGLKDAEKCIELDPSF), and 437-470 (TKGYSRKGAIQFFMKEYDKAMETYQEGLKHDPKN). Residues 507–546 (DPEVQNILSDPVMRQVLVDFQENPKAAQEHMKNPMVMNKI) enclose the STI1 2 domain.

As to quaternary structure, co-chaperone that forms a complex with HSP70 and HSP90 and preproteins (e.g. chloroplast preproteins). Phosphorylated. Post-translationally, acetylated.

The protein resides in the cytoplasm. The protein localises to the nucleus. In terms of biological role, mediates the association of the molecular chaperones HSP70 and HSP90. Mediates nuclear encoded chloroplast preproteins binding to HSP90 prior to chloroplastic sorting. Involved in acclimation to heat. This is Hsp70-Hsp90 organizing protein 3 (HOP3) from Arabidopsis thaliana (Mouse-ear cress).